The sequence spans 155 residues: RNA pyrophosphohydrolase (155 aa).

One can recognise a Nudix hydrolase domain in the interval 6–148; it reads GYRANVAIVL…KQDVYRRALT (143 aa). Positions 38–59 match the Nudix box motif; the sequence is GGVATGETPLQAMYRELYEEVG.

It belongs to the Nudix hydrolase family. RppH subfamily. A divalent metal cation is required as a cofactor.

Its function is as follows. Accelerates the degradation of transcripts by removing pyrophosphate from the 5'-end of triphosphorylated RNA, leading to a more labile monophosphorylated state that can stimulate subsequent ribonuclease cleavage. This chain is RNA pyrophosphohydrolase, found in Francisella philomiragia subsp. philomiragia (strain ATCC 25017 / CCUG 19701 / FSC 153 / O#319-036).